A 140-amino-acid chain; its full sequence is Acyl carrier protein 1, chloroplastic (140 aa).

Residues 1–56 (MASAAAGASICIKSASFSPLAPGRISSLRSVSLPVSRKSFPSLKSSKSSFALRVSC) constitute a chloroplast transit peptide. Residues 60–135 (PETVAKVCGI…DAADLIEKLM (76 aa)) form the Carrier domain. At S95 the chain carries O-(pantetheine 4'-phosphoryl)serine.

The protein belongs to the acyl carrier protein (ACP) family. In terms of processing, 4'-phosphopantetheine is transferred from CoA to a specific serine of apo-ACP by acpS. This modification is essential for activity because fatty acids are bound in thioester linkage to the sulfhydryl of the prosthetic group.

The protein resides in the plastid. It is found in the chloroplast. The protein operates within lipid metabolism; fatty acid biosynthesis. Its function is as follows. Carrier of the growing fatty acid chain in fatty acid biosynthesis. This Cuphea lanceolata (Cigar flower) protein is Acyl carrier protein 1, chloroplastic (ACL1.1).